A 228-amino-acid chain; its full sequence is Vesicle transport protein SEC20 (228 aa).

Over 1 to 199 (MAAPQDVHVR…LITKYNRREL (199 aa)) the chain is Cytoplasmic. Residues 37 to 90 (LSELTELNTKVKEKFQQLKQRIQELEQSAREQDKESEKQLLLQEVENHKKQMLS) are a coiled coil. A helical; Anchor for type IV membrane protein transmembrane segment spans residues 200-220 (TDKLLIFLALALFLATVLYIV). Over 221 to 228 (KKRLFPFL) the chain is Lumenal.

The protein belongs to the SEC20 family. Component of a SNARE complex consisting of STX18, USE1L, BNIP1/SEC20L and SEC22B. Interacts directly with STX18, RINT1/TIP20L and NAPA. Interacts with ZW10 through RINT1. Interacts with BCL2. Interacts with RNF186. Interacts with RNF185. Interacts with SQSTM1; increased by 'Lys-63'-linked polyubiquitination of BNIP1. Polyubiquitinated. 'Lys-63'-linked polyubiquitination by RNF185 increases the interaction with the autophagy receptor SQSTM1. Undergoes 'Lys-29'- and 'Lys-63'-linked polyubiquitination by RNF186 that may regulate BNIP1 localization to the mitochondrion.

Its subcellular location is the endoplasmic reticulum membrane. It is found in the mitochondrion membrane. In terms of biological role, as part of a SNARE complex may be involved in endoplasmic reticulum membranes fusion and be required for the maintenance of endoplasmic reticulum organization. Also plays a role in apoptosis. It is for instance required for endoplasmic reticulum stress-induced apoptosis. As a substrate of RNF185 interacting with SQSTM1, might also be involved in mitochondrial autophagy. The protein is Vesicle transport protein SEC20 of Mus musculus (Mouse).